We begin with the raw amino-acid sequence, 440 residues long: UDP-N-acetylmuramoylalanine--D-glutamate ligase (440 aa).

115–121 (GSNGKST) provides a ligand contact to ATP.

Belongs to the MurCDEF family.

It is found in the cytoplasm. The catalysed reaction is UDP-N-acetyl-alpha-D-muramoyl-L-alanine + D-glutamate + ATP = UDP-N-acetyl-alpha-D-muramoyl-L-alanyl-D-glutamate + ADP + phosphate + H(+). It participates in cell wall biogenesis; peptidoglycan biosynthesis. Functionally, cell wall formation. Catalyzes the addition of glutamate to the nucleotide precursor UDP-N-acetylmuramoyl-L-alanine (UMA). In Vibrio cholerae serotype O1 (strain ATCC 39541 / Classical Ogawa 395 / O395), this protein is UDP-N-acetylmuramoylalanine--D-glutamate ligase.